A 61-amino-acid polypeptide reads, in one-letter code: Small ribosomal subunit protein uS14C (61 aa).

4 residues coordinate Zn(2+): Cys-24, Cys-27, Cys-40, and Cys-43.

The protein belongs to the universal ribosomal protein uS14 family. Zinc-binding uS14 subfamily. Part of the 30S ribosomal subunit. Contacts proteins S3 and S10. Zn(2+) serves as cofactor.

In terms of biological role, binds 16S rRNA, required for the assembly of 30S particles and may also be responsible for determining the conformation of the 16S rRNA at the A site. This is Small ribosomal subunit protein uS14C from Enterococcus faecalis (strain ATCC 700802 / V583).